We begin with the raw amino-acid sequence, 528 residues long: MGIANMTNKLDLLLQKPYVHHQLSVAELVEKVLQRNEGRLTHTGAVAVTTGKYTGRSPKDKYIVEEPSTKQTIDWGAVNQPMSPETFDKLYDKVLDYLMKKDELFVFKGFAGADPKYRLPIQVVNEFAWHNLFVHQLFIRPSAAELAAHEPQFTVICAPNFKADPKVDGTRSEAFIIISFERRTVLIGGTEYAGEMKKSIFSVMNYLLPEQGILPMHCSANVGQEGDVALFFGLSGTGKTTLSTDPNRRLIGDDEHGWSNRGIFNIEGGCYAKCINLSREKEPQIFDAIGFGAVLENVVLDDATRVPNYDDGTLTENTRAAYPLQAIKNIVDPSVAGHPSTIVFLTADAFGVLPPISKLTREQAMYHFLSGYTSKLAGTERGVTEPEATFSTCFGAPFLPRPAVEYAEMLGQKIAEHNVRVFLVNTGWTGGPYGVGSRMKLAYTRAMVQAAVEGELDNVETVQDPIFGLAIPSHVPGVPDDVLQPQNTWADKQAYEQKAKELAQKFRANFRKFAHIDPTIEKLGGPLV.

Residues Arg56, Tyr192, and Lys198 each coordinate substrate. Residues Lys198, His217, and Gly233–Thr241 each bind ATP. Lys198 and His217 together coordinate Mn(2+). Asp254 serves as a coordination point for Mn(2+). Positions 282, 319, and 444 each coordinate ATP. Arg319 contacts substrate.

It belongs to the phosphoenolpyruvate carboxykinase (ATP) family. Mn(2+) is required as a cofactor.

The protein localises to the cytoplasm. The enzyme catalyses oxaloacetate + ATP = phosphoenolpyruvate + ADP + CO2. Its pathway is carbohydrate biosynthesis; gluconeogenesis. Its function is as follows. Involved in the gluconeogenesis. Catalyzes the conversion of oxaloacetate (OAA) to phosphoenolpyruvate (PEP) through direct phosphoryl transfer between the nucleoside triphosphate and OAA. This is Phosphoenolpyruvate carboxykinase (ATP) from Geobacillus kaustophilus (strain HTA426).